The primary structure comprises 233 residues: Coenzyme Q-binding protein COQ10 homolog, mitochondrial (233 aa).

Residues 1–34 (MAEKATSLFLRAMEISEKQSFDVMRRNSSCTIRH) constitute a mitochondrion transit peptide.

The protein belongs to the COQ10 family. As to quaternary structure, interacts with coenzyme Q.

It localises to the mitochondrion inner membrane. Functionally, required for the function of coenzyme Q in the respiratory chain. May serve as a chaperone or may be involved in the transport of Q6 from its site of synthesis to the catalytic sites of the respiratory complexes. The chain is Coenzyme Q-binding protein COQ10 homolog, mitochondrial from Danio rerio (Zebrafish).